Here is a 195-residue protein sequence, read N- to C-terminus: Glycerol-3-phosphate acyltransferase (195 aa).

5 helical membrane-spanning segments follow: residues 3–23, 53–73, 80–100, 115–135, and 147–167; these read IHAV…GLIL, AVMT…LAKI, FAFI…WLLF, LIEY…FAIF, and IFVA…VFIA.

Belongs to the PlsY family. In terms of assembly, probably interacts with PlsX.

The protein localises to the cell inner membrane. It catalyses the reaction an acyl phosphate + sn-glycerol 3-phosphate = a 1-acyl-sn-glycero-3-phosphate + phosphate. Its pathway is lipid metabolism; phospholipid metabolism. Functionally, catalyzes the transfer of an acyl group from acyl-phosphate (acyl-PO(4)) to glycerol-3-phosphate (G3P) to form lysophosphatidic acid (LPA). This enzyme utilizes acyl-phosphate as fatty acyl donor, but not acyl-CoA or acyl-ACP. In Ehrlichia chaffeensis (strain ATCC CRL-10679 / Arkansas), this protein is Glycerol-3-phosphate acyltransferase.